The chain runs to 335 residues: D-alanine--D-alanine ligase (335 aa).

Residues 124–329 (KMWFSALGVP…FTHYLYSNIK (206 aa)) form the ATP-grasp domain. 154 to 209 (ALENWGSIFIKAASQGSSVGCYRVDSQDELVSSLEQAFSFSPYVIVEKTINARELE) is a binding site for ATP. Residues Asp283, Glu296, and Asn298 each contribute to the Mg(2+) site.

It belongs to the D-alanine--D-alanine ligase family. Mg(2+) serves as cofactor. Mn(2+) is required as a cofactor.

It localises to the cytoplasm. The catalysed reaction is 2 D-alanine + ATP = D-alanyl-D-alanine + ADP + phosphate + H(+). It functions in the pathway cell wall biogenesis; peptidoglycan biosynthesis. Cell wall formation. The polypeptide is D-alanine--D-alanine ligase (Shewanella woodyi (strain ATCC 51908 / MS32)).